Reading from the N-terminus, the 269-residue chain is 4-hydroxy-tetrahydrodipicolinate reductase (269 aa).

Residues 13-18 and Asp-39 each bind NAD(+); that span reads GASGRM. NADP(+) is bound at residue Arg-40. NAD(+)-binding positions include 101–103 and 125–128; these read GTT and APNM. The active-site Proton donor/acceptor is the His-158. Residue His-159 coordinates (S)-2,3,4,5-tetrahydrodipicolinate. The Proton donor role is filled by Lys-162. 168–169 provides a ligand contact to (S)-2,3,4,5-tetrahydrodipicolinate; the sequence is GT.

Belongs to the DapB family.

The protein localises to the cytoplasm. It catalyses the reaction (S)-2,3,4,5-tetrahydrodipicolinate + NAD(+) + H2O = (2S,4S)-4-hydroxy-2,3,4,5-tetrahydrodipicolinate + NADH + H(+). It carries out the reaction (S)-2,3,4,5-tetrahydrodipicolinate + NADP(+) + H2O = (2S,4S)-4-hydroxy-2,3,4,5-tetrahydrodipicolinate + NADPH + H(+). It participates in amino-acid biosynthesis; L-lysine biosynthesis via DAP pathway; (S)-tetrahydrodipicolinate from L-aspartate: step 4/4. In terms of biological role, catalyzes the conversion of 4-hydroxy-tetrahydrodipicolinate (HTPA) to tetrahydrodipicolinate. In Bordetella bronchiseptica (strain ATCC BAA-588 / NCTC 13252 / RB50) (Alcaligenes bronchisepticus), this protein is 4-hydroxy-tetrahydrodipicolinate reductase.